A 180-amino-acid chain; its full sequence is ADP-ribosylation factor 4 (180 aa).

Residue glycine 2 is the site of N-myristoyl glycine attachment. Residues 24–31, 67–71, and 126–129 contribute to the GTP site; these read GLDAAGKT, DVGGQ, and NKQD. Serine 147 bears the Phosphoserine mark.

This sequence belongs to the small GTPase superfamily. Arf family. As to quaternary structure, forms a complex containing RAB11A, ASAP1, RAB3IP, RAP11FIP3 and ARF4; the complex promotes preciliary trafficking; the complex binds to RHO in photoreceptor cells and promotes RHO ciliary transport.

It localises to the golgi apparatus. The protein localises to the membrane. In terms of biological role, GTP-binding protein that functions as an allosteric activator of the cholera toxin catalytic subunit, an ADP-ribosyltransferase. Involved in protein trafficking; may modulate vesicle budding and uncoating within the Golgi apparatus. Part of the ciliary targeting complex containing Rab11, ASAP1, Rabin8/RAB3IP, RAB11FIP3 and ARF4, which direct preciliary vesicle trafficking to mother centriole and ciliogenesis initiation. The chain is ADP-ribosylation factor 4 (Arf4) from Mus musculus (Mouse).